Here is a 346-residue protein sequence, read N- to C-terminus: Coproporphyrin III ferrochelatase (346 aa).

Fe-coproporphyrin III contacts are provided by Ser-52 and Tyr-121. Fe(2+) contacts are provided by His-181 and Glu-264.

Belongs to the ferrochelatase family.

Its subcellular location is the cytoplasm. The catalysed reaction is Fe-coproporphyrin III + 2 H(+) = coproporphyrin III + Fe(2+). It participates in porphyrin-containing compound metabolism; protoheme biosynthesis. Its function is as follows. Involved in coproporphyrin-dependent heme b biosynthesis. Catalyzes the insertion of ferrous iron into coproporphyrin III to form Fe-coproporphyrin III. The protein is Coproporphyrin III ferrochelatase of Mycobacterium sp. (strain KMS).